We begin with the raw amino-acid sequence, 607 residues long: Sulfite reductase [NADPH] flavoprotein alpha-component (607 aa).

Residues 66-204 (VTILYGSQTG…AAGQWHADVL (139 aa)) enclose the Flavodoxin-like domain. FMN-binding positions include 72-77 (SQTGNG), 119-122 (STHG), and 155-164 (LGDSSYEFFC). The region spanning 239–456 (QNPYRAEVLV…VEPNKHFRLP (218 aa)) is the FAD-binding FR-type domain. Residues T327, L361, 395–398 (RLYS), 413–415 (TVA), and 428–431 (GGAS) contribute to the FAD site. NADP(+) contacts are provided by residues 527 to 528 (SR), 533 to 537 (KIYVQ), and D569. Y607 contributes to the FAD binding site.

The protein belongs to the NADPH-dependent sulphite reductase flavoprotein subunit CysJ family. This sequence in the N-terminal section; belongs to the flavodoxin family. In the C-terminal section; belongs to the flavoprotein pyridine nucleotide cytochrome reductase family. Alpha(8)-beta(8). The alpha component is a flavoprotein, the beta component is a hemoprotein. It depends on FAD as a cofactor. The cofactor is FMN.

The enzyme catalyses hydrogen sulfide + 3 NADP(+) + 3 H2O = sulfite + 3 NADPH + 4 H(+). The protein operates within sulfur metabolism; hydrogen sulfide biosynthesis; hydrogen sulfide from sulfite (NADPH route): step 1/1. Functionally, component of the sulfite reductase complex that catalyzes the 6-electron reduction of sulfite to sulfide. This is one of several activities required for the biosynthesis of L-cysteine from sulfate. The flavoprotein component catalyzes the electron flow from NADPH -&gt; FAD -&gt; FMN to the hemoprotein component. This chain is Sulfite reductase [NADPH] flavoprotein alpha-component, found in Shewanella oneidensis (strain ATCC 700550 / JCM 31522 / CIP 106686 / LMG 19005 / NCIMB 14063 / MR-1).